Consider the following 150-residue polypeptide: Photosystem I reaction center subunit XI (150 aa).

The Stromal portion of the chain corresponds to 1–72 (MSDFIQSYNN…DKLGPLRNTD (72 aa)). A helical transmembrane segment spans residues 73-93 (VALLSGFLSAVGLIIILTVCL). Topologically, residues 94-118 (SMYGNVSFDKDDAKDLLQTTEGWGQ) are lumenal. Residues 119–139 (FTAGFLVGAVGGSGFAYLLLA) form a helical membrane-spanning segment. Over 140–150 (NIPVLQNLGLS) the chain is Stromal.

Belongs to the PsaL family.

The protein resides in the plastid. The protein localises to the chloroplast thylakoid membrane. In Gracilaria tenuistipitata var. liui (Red alga), this protein is Photosystem I reaction center subunit XI.